The chain runs to 457 residues: CUB1 family protein C30C2.08 (457 aa).

Coiled coils occupy residues 119–174 and 418–448; these read TQND…NISK and QELVNSLLTQCHQLIEELRDEKHQHDIEERE.

The protein belongs to the CUB1 family.

Its subcellular location is the cytoplasm. The protein resides in the nucleus. In terms of biological role, involved in bleomycin tolerance with links to DNA repair and/or proteasome function. The polypeptide is CUB1 family protein C30C2.08 (Schizosaccharomyces pombe (strain 972 / ATCC 24843) (Fission yeast)).